The primary structure comprises 305 residues: Peroxisome biogenesis factor 2 (305 aa).

Residues 1–15 (MAAREESTQSANRVL) lie on the Peroxisomal matrix side of the membrane. A helical transmembrane segment spans residues 16–42 (RISQLDALELNKALEQLVWSQFTQCFH). Residues 43 to 48 (GFKPGL) are Cytoplasmic-facing. The chain crosses the membrane as a helical span at residues 49 to 74 (LARFEPEVKAFLWLFLWRFTIYSKNA). Topologically, residues 75 to 98 (TVGQSVLNIQHKNDSSPNPVYQPP) are peroxisomal matrix. Residues 99 to 125 (SKNQKLLYAVCTIGGRWLEERCYDLFR) traverse the membrane as a helical segment. Residues 126–133 (NRHLASFG) lie on the Cytoplasmic side of the membrane. The chain crosses the membrane as a helical span at residues 134–160 (KAKQCMNFVVGLLKLGELMNFLIFLQK). Topologically, residues 161 to 187 (GKFATLTERLLGIHSVFCKPQNMREVG) are peroxisomal matrix. A helical membrane pass occupies residues 188-211 (FEYMNRELLWHGFAEFLIFLLPLI). At 212–305 (NIQKLKAKLS…GIQMSEVNAL (94 aa)) the chain is on the cytoplasmic side. Zn(2+) contacts are provided by cysteine 244, cysteine 247, cysteine 259, histidine 261, cysteine 264, cysteine 267, cysteine 280, and cysteine 283. The segment at 244–284 (CALCGEWPTMPHTIGCEHVFCYYCVKSSFLFDIYFTCPKCG) adopts an RING-type zinc-finger fold.

The protein belongs to the pex2/pex10/pex12 family. In terms of assembly, component of the PEX2-PEX10-PEX12 retrotranslocation channel, composed of PEX2, PEX10 and PEX12. Forms intramolecular and intermolecular disulfide bonds in response to reactive oxygen species (ROS), promoting higher stability.

It localises to the peroxisome membrane. It catalyses the reaction [E2 ubiquitin-conjugating enzyme]-S-ubiquitinyl-L-cysteine + [acceptor protein]-L-cysteine = [E2 ubiquitin-conjugating enzyme]-L-cysteine + [acceptor protein]-S-ubiquitinyl-L-cysteine.. The catalysed reaction is S-ubiquitinyl-[E2 ubiquitin-conjugating enzyme]-L-cysteine + [acceptor protein]-L-lysine = [E2 ubiquitin-conjugating enzyme]-L-cysteine + N(6)-ubiquitinyl-[acceptor protein]-L-lysine.. It participates in protein modification; protein ubiquitination. Its function is as follows. E3 ubiquitin-protein ligase component of a retrotranslocation channel required for peroxisome organization by mediating export of the PEX5 receptor from peroxisomes to the cytosol, thereby promoting PEX5 recycling. The retrotranslocation channel is composed of PEX2, PEX10 and PEX12; each subunit contributing transmembrane segments that coassemble into an open channel that specifically allows the passage of PEX5 through the peroxisomal membrane. PEX2 also regulates peroxisome organization by acting as a E3 ubiquitin-protein ligase. PEX2 ubiquitinates PEX5 during its passage through the retrotranslocation channel: catalyzes monoubiquitination of PEX5 at 'Cys-11', a modification that acts as a signal for PEX5 extraction into the cytosol. Required for pexophagy in response to starvation by mediating ubiquitination of peroxisomal proteins, such as PEX5 and ABCD3/PMP70. Also involved in the response to reactive oxygen species (ROS) by mediating 'Lys-48'-linked polyubiquitination and subsequent degradation of PNPLA2/ATGL, thereby regulating lipolysis. In Mus musculus (Mouse), this protein is Peroxisome biogenesis factor 2.